A 1482-amino-acid chain; its full sequence is Cystic fibrosis transmembrane conductance regulator (1482 aa).

The Cytoplasmic portion of the chain corresponds to 1 to 77 (MQRSPLEKAS…KLINALRRCF (77 aa)). A helical membrane pass occupies residues 78-98 (FWRFMFYGILLYLGEVTKAVQ). In terms of domain architecture, ABC transmembrane type-1 1 spans 81 to 365 (FMFYGILLYL…WAVQTWYDSL (285 aa)). Residues 99-122 (PLLLGRIIASYDPDNKVERSIAIY) lie on the Extracellular side of the membrane. A helical transmembrane segment spans residues 123–146 (LGIGLCLLFIVRTLLLHPAIFGLH). Topologically, residues 147-195 (HIGMQMRIAMFSLIYKKILKLSSRVLDKISIGQLVSLLSNNLNKFDEGL) are cytoplasmic. A helical membrane pass occupies residues 196 to 216 (ALAHFVWIAPLQVTLLMGLLW). The Extracellular portion of the chain corresponds to 217–222 (ELLQAS). A helical membrane pass occupies residues 223-243 (AFCGLGFLIVLALVQAGLGRM). The Cytoplasmic segment spans residues 244–298 (MMKYRDQRAGKINERLVITSEMIENIQSVKAYCWEEAMEKMIENLRQTELKLTRK). Residues 299-319 (AAYVRYFNSSAFFFSGFFVVF) form a helical membrane-spanning segment. Residues 320-339 (LSVLPYALIKGIILRKIFTT) are Extracellular-facing. Residues 340-358 (ISFCIVLRMAVTRQFPWAV) traverse the membrane as a helical segment. Over 359 to 859 (QTWYDSLGAI…YLRYLAVNKS (501 aa)) the chain is Cytoplasmic. ATP-binding positions include Trp-401, 458–465 (GSTGAGKT), and Gln-493. Residues 423–646 (NGDNSLFFSN…RPDFSSKLMG (224 aa)) enclose the ABC transporter 1 domain. Cys-524 carries S-palmitoyl cysteine lipidation. A phosphoserine mark is found at Ser-549 and Ser-660. A disordered R region region spans residues 654 to 832 (SAERRNSILT…EEINEEYLKE (179 aa)). Ser-670 carries the phosphoserine; by PKA modification. Residue Ser-686 is modified to Phosphoserine. Residue Lys-688 forms a Glycyl lysine isopeptide (Lys-Gly) (interchain with G-Cter in ubiquitin) linkage. Residues Ser-700 and Ser-712 each carry the phosphoserine modification. Thr-717 carries the post-translational modification Phosphothreonine. 5 positions are modified to phosphoserine: Ser-738, Ser-769, Ser-791, Ser-796, and Ser-814. Residues 860-880 (LSLVLIWCLVIFLAEVAISLA) form a helical membrane-spanning segment. The ABC transmembrane type-1 2 domain occupies 860 to 1156 (LSLVLIWCLV…AVNSSIDVDS (297 aa)). Residues 881–919 (VLLLLDKSPRYSKGNGTASGNGSSAVIITSTSSYYLFYI) lie on the Extracellular side of the membrane. N-linked (GlcNAc...) asparagine glycans are attached at residues Asn-895 and Asn-901. The discontinuously helical transmembrane segment at 920–940 (YVGVADTLLALGFFRGLPLVH) threads the bilayer. At 941–991 (TLITVSKILHHRMLHSVLRAPMSTLNMLKAGGILNRFSKDIAILDDLLPLT) the chain is on the cytoplasmic side. Residues 992 to 1012 (IFDFVQLLLIVIGAVAVVSVL) form a helical membrane-spanning segment. The Extracellular portion of the chain corresponds to 1013-1014 (QP). The helical transmembrane segment at 1015 to 1035 (YIFLATVPVIAAFVILRGYFL) threads the bilayer. Over 1036 to 1096 (HTSQQLKQLE…TANWFLYLST (61 aa)) the chain is Cytoplasmic. Residues 1097–1117 (LRWFQMRIEMIFVVFFIAVTF) traverse the membrane as a helical segment. Residues 1118–1131 (ISILTTGEGEGTVG) lie on the Extracellular side of the membrane. Residues 1132 to 1152 (IILTLAMNIMGTLQWAVNSSI) form a helical membrane-spanning segment. The Cytoplasmic portion of the chain corresponds to 1153–1482 (DVDSLMRSVS…TEEEVQETRL (330 aa)). In terms of domain architecture, ABC transporter 2 spans 1212–1445 (MTVKDLTARY…KSLFRQAISP (234 aa)). ATP contacts are provided by residues Tyr-1221 and 1246–1253 (GRTGAGKS). Residues 1388 to 1482 (RTLKQAFADC…TEEEVQETRL (95 aa)) form an interaction with GORASP2 region. Cys-1397 carries the S-palmitoyl cysteine lipid modification. 2 positions are modified to phosphoserine: Ser-1446 and Ser-1458. The interval 1450-1482 (KLFPRRNSSKHKSRSPITALKEETEEEVQETRL) is disordered. Residues 1451–1463 (LFPRRNSSKHKSR) are compositionally biased toward basic residues. The segment covering 1472–1482 (ETEEEVQETRL) has biased composition (acidic residues). Positions 1480-1482 (TRL) match the PDZ-binding motif.

Belongs to the ABC transporter superfamily. ABCC family. CFTR transporter (TC 3.A.1.202) subfamily. In terms of assembly, monomer; does not require oligomerization for channel activity. May form oligomers in the membrane. Interacts with SLC26A3, SLC26A6 and NHERF1. Interacts with SHANK2. Interacts with MYO6. Interacts (via C-terminus) with GOPC (via PDZ domain); this promotes CFTR internalization and thereby decreases channel activity. Interacts with SLC4A7 through NHERF1. Found in a complex with MYO5B and RAB11A. Interacts with ANO1. Interacts with SLC26A8. Interacts with AHCYL1; the interaction increases CFTR activity. Interacts with CSE1L. The core-glycosylated form interacts with GORASP2 (via PDZ GRASP-type 1 domain) in respone to ER stress. Interacts with MARCHF2; the interaction leads to CFTR ubiqtuitination and degradation. Interacts with ADGRG2. N-glycosylated. In terms of processing, phosphorylated; cAMP treatment promotes phosphorylation and activates the channel. Dephosphorylation decreases the ATPase activity (in vitro). Phosphorylation at PKA sites activates the channel. Phosphorylation at PKC sites enhances the response to phosphorylation by PKA. Phosphorylated by AMPK; this inhibits channel activity. Post-translationally, ubiquitinated, leading to its degradation in the lysosome. Deubiquitination by USP10 in early endosomes enhances its endocytic recycling to the cell membrane. Ubiquitinated by RNF185 during ER stress. Ubiquitinated by MARCHF2.

It localises to the apical cell membrane. The protein localises to the early endosome membrane. Its subcellular location is the cell membrane. It is found in the recycling endosome membrane. The protein resides in the endoplasmic reticulum membrane. It localises to the nucleus. It catalyses the reaction ATP + H2O + closed Cl(-) channel = ADP + phosphate + open Cl(-) channel.. The catalysed reaction is chloride(in) = chloride(out). The enzyme catalyses hydrogencarbonate(in) = hydrogencarbonate(out). It carries out the reaction ATP + H2O = ADP + phosphate + H(+). Functionally, epithelial ion channel that plays an important role in the regulation of epithelial ion and water transport and fluid homeostasis. Mediates the transport of chloride ions across the cell membrane. Possesses an intrinsic ATPase activity and utilizes ATP to gate its channel; the passive flow of anions through the channel is gated by cycles of ATP binding and hydrolysis by the ATP-binding domains. The ion channel is also permeable to HCO(3)(-); selectivity depends on the extracellular chloride concentration. Exerts its function also by modulating the activity of other ion channels and transporters. Contributes to the regulation of the pH and the ion content of the epithelial fluid layer. Modulates the activity of the epithelial sodium channel (ENaC) complex, in part by regulating the cell surface expression of the ENaC complex. May regulate bicarbonate secretion and salvage in epithelial cells by regulating the transporter SLC4A7. Can inhibit the chloride channel activity of ANO1. Plays a role in the chloride and bicarbonate homeostasis during sperm epididymal maturation and capacitation. In Otolemur garnettii (Small-eared galago), this protein is Cystic fibrosis transmembrane conductance regulator.